Reading from the N-terminus, the 79-residue chain is Protein OPG081 (79 aa).

The Intravirion segment spans residues 2-8 (VDAITVL). The chain crosses the membrane as a helical span at residues 9-29 (TAIGITVLMLLMVISGAALIV). Residues 30 to 47 (KELNPNDIFTMQSLKFNR) are Virion surface-facing. Residues 48 to 68 (AVTIFKYIGLFIYIPGTIILY) form a helical membrane-spanning segment. Over 69-79 (ATYVKSLLMKS) the chain is Intravirion.

This sequence belongs to the orthopoxvirus OPG081 family.

Its subcellular location is the virion membrane. Functionally, envelope protein. In Vaccinia virus (strain Western Reserve) (VACV), this protein is Protein OPG081 (OPG081).